We begin with the raw amino-acid sequence, 572 residues long: MFS-type transporter pydD (572 aa).

The span at 1–15 shows a compositional bias: basic and acidic residues; it reads MLQEDKSSETMHDPS. Residues 1–46 are disordered; it reads MLQEDKSSETMHDPSTRGVETRNVTAVDSPLETATTSESPETERTN. A glycan (N-linked (GlcNAc...) asparagine) is linked at N23. Low complexity predominate over residues 29-39; the sequence is SPLETATTSES. Helical transmembrane passes span 56–76, 88–108, 123–143, 156–176, 185–205, 212–232, 255–275, and 282–302; these read FWAL…EGTI, LGGG…MTAM, WPML…GGAT, GIGA…VVPL, IVMG…GLIV, WTFY…FSFL, ALFV…GSVY, and VLVP…FEGS. Residue N317 is glycosylated (N-linked (GlcNAc...) asparagine). 6 helical membrane-spanning segments follow: residues 321 to 341, 358 to 378, 386 to 406, 419 to 439, 451 to 471, and 529 to 549; these read VGVM…LYFM, VQIL…GFLM, PIHY…SLLD, IVYS…LLAP, TWSF…AAVF, and WLVS…AREV.

Belongs to the major facilitator superfamily.

It localises to the membrane. In terms of biological role, MFS-type transporter; part of the gene cluster that mediates the biosynthesis of pyrrocidines, fungal natural products containing a macrocyclic para-cyclophane connected to a decahydrofluorene ring system that show potent antibiotic activities toward Gram-negative bacteria. This is MFS-type transporter pydD from Acremonium sp.